Consider the following 74-residue polypeptide: DNA-directed RNA polymerase subunit omega (74 aa).

The protein belongs to the RNA polymerase subunit omega family. The RNAP catalytic core consists of 2 alpha, 1 beta, 1 beta' and 1 omega subunit. When a sigma factor is associated with the core the holoenzyme is formed, which can initiate transcription.

It carries out the reaction RNA(n) + a ribonucleoside 5'-triphosphate = RNA(n+1) + diphosphate. Functionally, promotes RNA polymerase assembly. Latches the N- and C-terminal regions of the beta' subunit thereby facilitating its interaction with the beta and alpha subunits. This is DNA-directed RNA polymerase subunit omega from Helicobacter acinonychis (strain Sheeba).